We begin with the raw amino-acid sequence, 111 residues long: Putative protein YddJ (111 aa).

This is Putative protein YddJ (yddJ) from Escherichia coli (strain K12).